The chain runs to 716 residues: Phosphoribosylformylglycinamidine synthase subunit PurL (716 aa).

The active site involves His34. An ATP-binding site is contributed by Tyr37. Glu78 provides a ligand contact to Mg(2+). Substrate-binding positions include 79-82 (SHNH) and Arg101. The active-site Proton acceptor is the His80. Asp102 provides a ligand contact to Mg(2+). Gln226 provides a ligand contact to substrate. Position 254 (Asp254) interacts with Mg(2+). 298–300 (ESQ) contributes to the substrate binding site. The ATP site is built by Asp474 and Gly511. Asn512 is a binding site for Mg(2+). Ser514 lines the substrate pocket.

The protein belongs to the FGAMS family. In terms of assembly, monomer. Part of the FGAM synthase complex composed of 1 PurL, 1 PurQ and 2 PurS subunits.

It is found in the cytoplasm. The enzyme catalyses N(2)-formyl-N(1)-(5-phospho-beta-D-ribosyl)glycinamide + L-glutamine + ATP + H2O = 2-formamido-N(1)-(5-O-phospho-beta-D-ribosyl)acetamidine + L-glutamate + ADP + phosphate + H(+). The protein operates within purine metabolism; IMP biosynthesis via de novo pathway; 5-amino-1-(5-phospho-D-ribosyl)imidazole from N(2)-formyl-N(1)-(5-phospho-D-ribosyl)glycinamide: step 1/2. Its function is as follows. Part of the phosphoribosylformylglycinamidine synthase complex involved in the purines biosynthetic pathway. Catalyzes the ATP-dependent conversion of formylglycinamide ribonucleotide (FGAR) and glutamine to yield formylglycinamidine ribonucleotide (FGAM) and glutamate. The FGAM synthase complex is composed of three subunits. PurQ produces an ammonia molecule by converting glutamine to glutamate. PurL transfers the ammonia molecule to FGAR to form FGAM in an ATP-dependent manner. PurS interacts with PurQ and PurL and is thought to assist in the transfer of the ammonia molecule from PurQ to PurL. The sequence is that of Phosphoribosylformylglycinamidine synthase subunit PurL from Methanobrevibacter smithii (strain ATCC 35061 / DSM 861 / OCM 144 / PS).